The chain runs to 447 residues: Tubulin beta chain (447 aa).

Residues Gln-11, Glu-69, Ser-138, Gly-142, Thr-143, Gly-144, Asn-204, and Asn-226 each contribute to the GTP site. Glu-69 is a binding site for Mg(2+). The segment at 424–447 (QYQEARSTDSDEYDNEEYYNQQEE) is disordered. Residues 433 to 447 (SDEYDNEEYYNQQEE) show a composition bias toward acidic residues.

It belongs to the tubulin family. In terms of assembly, dimer of alpha and beta chains. A typical microtubule is a hollow water-filled tube with an outer diameter of 25 nm and an inner diameter of 15 nM. Alpha-beta heterodimers associate head-to-tail to form protofilaments running lengthwise along the microtubule wall with the beta-tubulin subunit facing the microtubule plus end conferring a structural polarity. Microtubules usually have 13 protofilaments but different protofilament numbers can be found in some organisms and specialized cells. It depends on Mg(2+) as a cofactor. In terms of tissue distribution, lens specific.

It localises to the cytoplasm. The protein localises to the cytoskeleton. Its function is as follows. Tubulin is the major constituent of microtubules, a cylinder consisting of laterally associated linear protofilaments composed of alpha- and beta-tubulin heterodimers. Microtubules grow by the addition of GTP-tubulin dimers to the microtubule end, where a stabilizing cap forms. Below the cap, tubulin dimers are in GDP-bound state, owing to GTPase activity of alpha-tubulin. This is Tubulin beta chain from Enteroctopus dofleini (North Pacific giant octopus).